The sequence spans 24 residues: Heptapoietin A light chain (24 aa).

In terms of assembly, heterodimer of a heavy and a light chain linked by disulfide bond(s).

In terms of biological role, HPTA is an acidic heparin-binding growth factor for hepatocytes. This chain is Heptapoietin A light chain, found in Oryctolagus cuniculus (Rabbit).